The primary structure comprises 507 residues: Inactive alanine aminotransferase (507 aa).

The pyridoxal 5'-phosphate site is built by alanine 173, serine 174, tyrosine 199, asparagine 255, and serine 324. Residue lysine 327 is modified to N6-(pyridoxal phosphate)lysine. Arginine 336 contributes to the pyridoxal 5'-phosphate binding site.

It belongs to the class-I pyridoxal-phosphate-dependent aminotransferase family. Alanine aminotransferase subfamily. As to quaternary structure, homodimer. It depends on pyridoxal 5'-phosphate as a cofactor.

It localises to the cytoplasm. The protein resides in the nucleus. Functionally, inactive alanine aminotransferase. Forms a catalytically active Schiff base with PLP, but lacks alanine transaminase activity, probably due to an altered structural conformation of the dimeric enzyme. This suggests this protein may have a yet undiscovered physiological function. This is Inactive alanine aminotransferase (ALT2) from Saccharomyces cerevisiae (strain ATCC 204508 / S288c) (Baker's yeast).